A 560-amino-acid chain; its full sequence is Secreted RxLR effector protein 142 (560 aa).

Positions 1–22 are cleaved as a signal peptide; that stretch reads MRRAYFVAIALLVAAGGKTAAG. Disordered regions lie at residues 48–73 and 354–377; these read QSQN…ERTP and INRP…LNNQ. Residues 54-72 are compositionally biased toward basic and acidic residues; sequence ESRDPKDDLKLSAGNEERT. The RxLR-dEER signature appears at 56-71; that stretch reads RDPKDDLKLSAGNEER. A compositionally biased stretch (polar residues) spans 361 to 377; that stretch reads GPSTNGATTSNGGLNNQ.

This sequence belongs to the RxLR effector family.

It is found in the secreted. The protein localises to the host nucleus. Secreted effector that completely suppresses the host cell death induced by cell death-inducing proteins. This chain is Secreted RxLR effector protein 142, found in Plasmopara viticola (Downy mildew of grapevine).